Reading from the N-terminus, the 714-residue chain is MGKNEARRSALAPDHGTVVCDPLRRLNRMHATPEESIRIVAAQKKKAQDEYGAASITILEGLEAVRKRPGMYIGSTGERGLHHLIWEVVDNAVDEAMAGYATTVNVVLLEDGGVEVADDGRGIPVATHASGIPTVDVVMTQLHAGGKFDSDAYAISGGLHGVGVSVVNALSTRLEVEIKRDGYEWSQVYEKSEPLGLKQGAPTKKTGSTVRFWADPAVFETTEYDFETVARRLQEMAFLNKGLTINLTDERVTQDEVVDEVVSDVAEAPKSASERAAESTAPHKVKSRTFHYPGGLVDFVKHINRTKNAIHSSIVDFSGKGTGHEVEIAMQWNAGYSESVHTFANTINTHEGGTHEEGFRSALTSVVNKYAKDRKLLKDKDPNLTGDDIREGLAAVISVKVSEPQFEGQTKTKLGNTEVKSFVQKVCNEQLTHWFEANPTDSKVVVNKAVSSAQARIAARKARELVRRKSATDIGGLPGKLADCRSTDPRKSELYVVEGDSAGGSAKSGRDSMFQAILPLRGKIINVEKARIDRVLKNTEVQAIITALGTGIHDEFDIGKLRYHKIVLMADADVDGQHISTLLLTLLFRFMRPLIENGHVFLAQPPLYKLKWQRSDPEFAYSDRERDGLLEAGLKAGKKINKEDGIQRYKGLGEMDAKELWETTMDPSVRVLRQVTLDDAAAADELFSILMGEDVDARRSFITRNAKDVRFLDV.

The Toprim domain maps to serine 492–proline 606. Mg(2+)-binding residues include glutamate 498, aspartate 571, and aspartate 573.

This sequence belongs to the type II topoisomerase GyrB family. In terms of assembly, heterotetramer, composed of two GyrA and two GyrB chains. In the heterotetramer, GyrA contains the active site tyrosine that forms a transient covalent intermediate with DNA, while GyrB binds cofactors and catalyzes ATP hydrolysis. It depends on Mg(2+) as a cofactor. Mn(2+) is required as a cofactor. Requires Ca(2+) as cofactor.

It localises to the cytoplasm. It catalyses the reaction ATP-dependent breakage, passage and rejoining of double-stranded DNA.. With respect to regulation, DNA supercoiling is inhibited by EDTA, novobiocin, coumermycin and ciprofloxacin. In terms of biological role, a type II topoisomerase that negatively supercoils closed circular double-stranded DNA in an ATP-dependent manner and also catalyzes the interconversion of other topological isomers of double-stranded DNA rings, including catenanes and knotted rings. Relaxes negatively supercoiled DNA in an ATP-independent manner. A linear reaction intermediate can be trapped in the presence of the antibiotic ciprofloxacin. Negative supercoiling favors strand separation, and DNA replication, transcription, recombination and repair, all of which involve strand separation. Type II topoisomerases break and join 2 DNA strands simultaneously in an ATP-dependent manner. This Mycobacterium bovis (strain BCG / Pasteur 1173P2) protein is DNA gyrase subunit B.